A 339-amino-acid polypeptide reads, in one-letter code: Heat-inducible transcription repressor HrcA (339 aa).

This sequence belongs to the HrcA family.

Its function is as follows. Negative regulator of class I heat shock genes (grpE-dnaK-dnaJ and groELS operons). Prevents heat-shock induction of these operons. The chain is Heat-inducible transcription repressor HrcA from Clostridium perfringens (strain ATCC 13124 / DSM 756 / JCM 1290 / NCIMB 6125 / NCTC 8237 / Type A).